A 435-amino-acid polypeptide reads, in one-letter code: Protein deadpan (435 aa).

A compositionally biased stretch (low complexity) spans 18–27; it reads GYSDSYGSNG. The tract at residues 18 to 48 is disordered; sequence GYSDSYGSNGRMSNPNGLSKAELRKTNKPIM. Positions 40 to 97 constitute a bHLH domain; it reads LRKTNKPIMEKRRRARINHCLNELKSLILEAMKKDPARHTKLEKADILEMTVKHLQSV. In terms of domain architecture, Orange spans 116–149; the sequence is FKTGFVECAEEVNRYVSQMDGIDTGVRQRLSAHL. Disordered regions lie at residues 305–334 and 349–416; these read QLPVKNSTSPPLSPISSISSHCEESRAASP and STPP…DEPS. Residues 311–324 show a composition bias toward low complexity; sequence STSPPLSPISSISS. 2 stretches are compositionally biased toward polar residues: residues 355–378 and 385–395; these read SAETSFNTSGSLNLSAGSHDSSGC and LQQQQVSSTSG. Phosphoserine occurs at positions 407, 408, and 411. The WRPW motif motif lies at 432 to 435; that stretch reads WRPW.

As to quaternary structure, homodimer. Heterodimer with E(spl)mgamma-HLH and E(spl). Transcription repression requires formation of a complex with the corepressor protein Groucho. Interacts (via bHLH motif) with sisA. Interacts with da.

The protein localises to the nucleus. Its function is as follows. Transcriptional repressor of genes that require a bHLH protein for their transcription. In the larval brain, required to maintain the self-renewal and identity of type II neuroblasts by regulating the expression of the transcriptional repressor erm together with other self-renewal transcriptional repressors such as klu and E(spl)mgamma-HLH. As part of its role in neuroblasts development, has been shown to be a direct target of the Notch signaling pathway, however might work also independently of N/Notch. In the developing larval and pupal brain, required for mushroom body differentiation. Involved in sex determination and SXL transcription repression when in complex with the corepressor protein Groucho. In Drosophila melanogaster (Fruit fly), this protein is Protein deadpan (dpn).